The chain runs to 222 residues: Peroxiredoxin (222 aa).

A Thioredoxin domain is found at 7 to 163 (PRLGEPAPAF…VIRLVDALQT (157 aa)). Residue Cys-49 is the Cysteine sulfenic acid (-SOH) intermediate of the active site. Arg-126 contacts substrate. A disulfide bridge connects residues Cys-212 and Cys-218.

It belongs to the peroxiredoxin family. Prx6 subfamily. As to quaternary structure, homodecamer. Pentamer of dimers that assemble into a ring structure.

The protein resides in the cytoplasm. The catalysed reaction is a hydroperoxide + [thioredoxin]-dithiol = an alcohol + [thioredoxin]-disulfide + H2O. Its function is as follows. Thiol-specific peroxidase that catalyzes the reduction of hydrogen peroxide and organic hydroperoxides to water and alcohols, respectively. Plays a role in cell protection against oxidative stress by detoxifying peroxides. In Aquifex aeolicus (strain VF5), this protein is Peroxiredoxin.